A 243-amino-acid chain; its full sequence is Biosynthetic peptidoglycan transglycosylase (243 aa).

Residues 21-43 form a helical membrane-spanning segment; the sequence is LLIVSLVSALMSVLQVIVFRFVD.

Belongs to the glycosyltransferase 51 family.

Its subcellular location is the cell inner membrane. It catalyses the reaction [GlcNAc-(1-&gt;4)-Mur2Ac(oyl-L-Ala-gamma-D-Glu-L-Lys-D-Ala-D-Ala)](n)-di-trans,octa-cis-undecaprenyl diphosphate + beta-D-GlcNAc-(1-&gt;4)-Mur2Ac(oyl-L-Ala-gamma-D-Glu-L-Lys-D-Ala-D-Ala)-di-trans,octa-cis-undecaprenyl diphosphate = [GlcNAc-(1-&gt;4)-Mur2Ac(oyl-L-Ala-gamma-D-Glu-L-Lys-D-Ala-D-Ala)](n+1)-di-trans,octa-cis-undecaprenyl diphosphate + di-trans,octa-cis-undecaprenyl diphosphate + H(+). The protein operates within cell wall biogenesis; peptidoglycan biosynthesis. Its function is as follows. Peptidoglycan polymerase that catalyzes glycan chain elongation from lipid-linked precursors. The protein is Biosynthetic peptidoglycan transglycosylase of Xylella fastidiosa (strain Temecula1 / ATCC 700964).